We begin with the raw amino-acid sequence, 563 residues long: uncharacterized protein (563 aa).

Residues 1–13 are Cytoplasmic-facing; sequence MASRSCICQVSAG. A helical transmembrane segment spans residues 14 to 34; it reads IIFLIGAALLVAGLVIVLNVF. Residues 35-528 lie on the Lumenal side of the membrane; it reads PNIVNNQIND…LFTPVSTVNT (494 aa). Asn43, Asn112, Asn133, Asn188, Asn265, Asn295, Asn315, and Asn502 each carry an N-linked (GlcNAc...) asparagine glycan. Residues 529–549 form a helical membrane-spanning segment; that stretch reads ICWIAVGLGAGLIALSIVMVI. Topologically, residues 550 to 563 are cytoplasmic; sequence VSFCCFRDEHHKTS.

It belongs to the CD36 family.

It localises to the membrane. This is an uncharacterized protein from Caenorhabditis elegans.